Reading from the N-terminus, the 433-residue chain is Zinc finger and SCAN domain-containing protein 4 (433 aa).

Positions 44 to 126 (RMVLNSFQDS…RFMEDLTDDS (83 aa)) constitute an SCAN box domain. Polar residues-rich tracts occupy residues 162-184 (SAQT…TSLE) and 277-298 (QPEQ…NSTC). 2 disordered regions span residues 162 to 199 (SAQT…CNSS) and 272 to 298 (AGCI…NSTC). C2H2-type zinc fingers lie at residues 312–334 (YKCE…QRRH), 340–362 (FVCP…QIIH), 368–390 (FTCS…ERIH), and 396–418 (YTCP…MRTH). The disordered stretch occupies residues 414–433 (HMRTHEKITPPSVPSTPEAS).

Its subcellular location is the nucleus. The protein localises to the chromosome. It localises to the telomere. Its function is as follows. Embryonic stem (ES) cell-specific transcription factor required to regulate ES cell pluripotency. Binds telomeres and plays a key role in genomic stability in ES cells by regulating telomere elongation. Acts as an activator of spontaneous telomere sister chromatid exchange (T-SCE) and telomere elongation in undifferentiated ES cells. The chain is Zinc finger and SCAN domain-containing protein 4 (ZSCAN4) from Pongo pygmaeus (Bornean orangutan).